We begin with the raw amino-acid sequence, 1136 residues long: Unconventional myosin-Ib (1136 aa).

In terms of domain architecture, Myosin motor spans 15–701 (IGVGDMVLLE…TLFKLEDLRK (687 aa)). Serine 60 carries the post-translational modification Phosphoserine. ATP is bound at residue 108–115 (GESGAGKT). A Glycyl lysine isopeptide (Lys-Gly) (interchain with G-Cter in SUMO1); alternate cross-link involves residue lysine 287. Residue lysine 287 forms a Glycyl lysine isopeptide (Lys-Gly) (interchain with G-Cter in SUMO2); alternate linkage. The interval 578 to 600 (VATLMKNLQTKNPNYIRCIKPND) is actin-binding. IQ domains follow at residues 704–733 (LEDL…SQIV), 728–748 (KKSQ…KRYQ), 750–779 (TKSS…QKRC), 779–808 (CKEA…EARN), 808–837 (NKHA…EARR), and 837–866 (RKHA…ANAG). Residues 952–1136 (KALYPSSVGQ…NNRLLEVAVP (185 aa)) enclose the TH1 domain.

The protein belongs to the TRAFAC class myosin-kinesin ATPase superfamily. Myosin family.

Functionally, motor protein that may participate in process critical to neuronal development and function such as cell migration, neurite outgrowth and vesicular transport. This Homo sapiens (Human) protein is Unconventional myosin-Ib (MYO1B).